The primary structure comprises 418 residues: Pentatricopeptide repeat-containing protein At2g18520, mitochondrial (418 aa).

The transit peptide at 1–14 (MTSSRLYLRFLRRF) directs the protein to the mitochondrion. 8 PPR repeats span residues 101–135 (TETF…GTPR), 136–166 (TVVS…FPQR), 173–207 (DKIS…GVEV), 208–242 (TIIA…GCDL), 243–276 (DNTV…GLKP), 277–311 (DTVS…NAAT), 312–342 (FRTL…HKIP), and 343–373 (DFKT…VKKK).

This sequence belongs to the PPR family. P subfamily.

The protein localises to the mitochondrion. The chain is Pentatricopeptide repeat-containing protein At2g18520, mitochondrial from Arabidopsis thaliana (Mouse-ear cress).